The chain runs to 441 residues: MFLIWTFIVAVLAIQTKSVVAQSCRTPNGLNGNCVSVYECQALLAILNNQRRTQQDEKFLRDSQCGTKNSVPAVCCPCNAADGQQGNCVNINSCPYVLQLLKNPNEANLNYVRGSVCQGSEQQSICCVTAPQSTAVTTTPRPKRVHACQSEMTATPPNPEGKCCGRDIAVGDKIVGGAPASIDSYPWLVVIEYVRLERTMLLCGGALISGKYVLTAGHCVKGAILDVGTPKTVRLGEYNTTNPGRDCVSVSAGGTDCTDPLVKIGIEKTIPHPDYQPYHFLRKHDIGLIRLQSIAPFTDFIRPICLPSTDYTVNPPSKFALTVAGWGRYLQFDNGTVRSSKIKLHVTLPFVQRDVCEANQKPLRNGQRITLWKGQMCAGGEAGKDSCKGDSGGPLMYEHSKKYEAVGIVSFGPEKCGQIDIPGVYTNVYEYLPWIQNTIEP.

A signal peptide spans 1–21; it reads MFLIWTFIVAVLAIQTKSVVA. Gln22 carries the pyrrolidone carboxylic acid modification. Clip domains lie at 23–76 and 77–127; these read SCRT…AVCC and PCNA…SICC. 8 cysteine pairs are disulfide-bonded: Cys24–Cys75, Cys34–Cys65, Cys40–Cys76, Cys78–Cys126, Cys88–Cys117, Cys94–Cys127, Cys164–Cys305, and Cys203–Cys219. The 267-residue stretch at 174–440 folds into the Peptidase S1 domain; it reads IVGGAPASID…YLPWIQNTIE (267 aa). His218 (charge relay system) is an active-site residue. Residues Glu237, Asn239, Asn242, and Asp246 each contribute to the Ca(2+) site. Asn239 carries N-linked (GlcNAc...) asparagine glycosylation. Asp285 functions as the Charge relay system in the catalytic mechanism. Asn334 is a glycosylation site (N-linked (GlcNAc...) asparagine). 2 cysteine pairs are disulfide-bonded: Cys356-Cys377 and Cys387-Cys416. Residue Ser391 is the Charge relay system of the active site.

This sequence belongs to the peptidase S1 family. CLIP subfamily. In terms of assembly, in the active form, heterodimer of a light chain and a heavy chain; disulfide-linked. Proteolytically cleaved for activation. Cleavage produces a light chain and a catalytic heavy chain which remains covalently associated probably through an interchain disulfide bond. Post-translationally, glycosylated.

Its activity is regulated as follows. Stabilized by calcium. Inhibited by di-isopropyl phosphorofluoridate (DFP), phenylmethanesulfonylfluoride (PMSF), p-nitrophenyl-p'-guanidinobenzonate (p-NPGB), p-chloromercuribenzoate (PCMB), ethylenediaminetetraacetic acid (EDTA), urea and CI-13c. Endopeptidase with selective post-Arg cleavage site. Activates prophenoloxidase. Has a probable role in the melanization process as part of the innate immune response. This chain is Phenoloxidase-activating enzyme, found in Bombyx mori (Silk moth).